Reading from the N-terminus, the 366-residue chain is Aminomethyltransferase (366 aa).

It belongs to the GcvT family. In terms of assembly, the glycine cleavage system is composed of four proteins: P, T, L and H.

It catalyses the reaction N(6)-[(R)-S(8)-aminomethyldihydrolipoyl]-L-lysyl-[protein] + (6S)-5,6,7,8-tetrahydrofolate = N(6)-[(R)-dihydrolipoyl]-L-lysyl-[protein] + (6R)-5,10-methylene-5,6,7,8-tetrahydrofolate + NH4(+). Its function is as follows. The glycine cleavage system catalyzes the degradation of glycine. The polypeptide is Aminomethyltransferase (Thermosynechococcus vestitus (strain NIES-2133 / IAM M-273 / BP-1)).